The chain runs to 364 residues: CLIP domain-containing serine protease B15 (364 aa).

Positions Met-1–Ala-19 are cleaved as a signal peptide. Residues Pro-30–Cys-89 form the Clip domain. 3 disulfide bridges follow: Cys-31-Cys-88, Cys-41-Cys-72, and Cys-47-Cys-89. A glycan (N-linked (GlcNAc...) asparagine) is linked at Asn-46. A Peptidase S1 domain is found at Ile-107–Phe-359. Asn-131 is a glycosylation site (N-linked (GlcNAc...) asparagine). Cys-137 and Cys-153 are disulfide-bonded. His-152 functions as the Charge relay system in the catalytic mechanism. 3 N-linked (GlcNAc...) asparagine glycosylation sites follow: Asn-171, Asn-177, and Asn-206. Asp-212 (charge relay system) is an active-site residue. A disulfide bond links Cys-279 and Cys-296. N-linked (GlcNAc...) asparagine glycans are attached at residues Asn-287 and Asn-301. Residues Cys-306 and Cys-335 are joined by a disulfide bond. Residue Ser-310 is the Charge relay system of the active site.

The protein belongs to the peptidase S1 family. CLIP subfamily. Post-translationally, N-glycosylated. In terms of processing, proteolytically cleaved. As to expression, expressed by a subpopulation of hemocytes.

It localises to the secreted. In terms of biological role, serine protease. Plays a role in innate immunity against infections by parasite P.berghei and by Gram-negative bacteria such as E.coli. In response to P.berghei infection, contributes to the clearing of parasite ookinetes independent of melanization, an innate immune response which consists in the deposition of melanin pigments on invading pathogens and parasites. The protein is CLIP domain-containing serine protease B15 of Anopheles gambiae (African malaria mosquito).